The chain runs to 294 residues: Protoheme IX farnesyltransferase (294 aa).

Transmembrane regions (helical) follow at residues 24–44, 48–68, 96–116, 118–138, 145–165, 172–192, 224–244, 245–265, and 268–288; these read VVLL…PGWV, LIAF…AINH, ALWF…LFVN, LTAL…TGYL, NIVI…TAVT, ALLL…ALAI, VLLL…WIYL, LGAL…YFTD, and VVAM…FVFL.

It belongs to the UbiA prenyltransferase family. Protoheme IX farnesyltransferase subfamily.

Its subcellular location is the cell inner membrane. It catalyses the reaction heme b + (2E,6E)-farnesyl diphosphate + H2O = Fe(II)-heme o + diphosphate. It functions in the pathway porphyrin-containing compound metabolism; heme O biosynthesis; heme O from protoheme: step 1/1. Functionally, converts heme B (protoheme IX) to heme O by substitution of the vinyl group on carbon 2 of heme B porphyrin ring with a hydroxyethyl farnesyl side group. This is Protoheme IX farnesyltransferase from Legionella pneumophila (strain Corby).